A 220-amino-acid chain; its full sequence is Large ribosomal subunit protein uL3 (220 aa).

The segment at 61 to 81 (KGSKSNKYANKPAEGHAKKAD) is disordered.

This sequence belongs to the universal ribosomal protein uL3 family. In terms of assembly, part of the 50S ribosomal subunit. Forms a cluster with proteins L14 and L19.

One of the primary rRNA binding proteins, it binds directly near the 3'-end of the 23S rRNA, where it nucleates assembly of the 50S subunit. The chain is Large ribosomal subunit protein uL3 from Staphylococcus epidermidis (strain ATCC 35984 / DSM 28319 / BCRC 17069 / CCUG 31568 / BM 3577 / RP62A).